The primary structure comprises 226 residues: Triosephosphate isomerase (226 aa).

13–15 (NFK) serves as a coordination point for substrate. His-97 functions as the Electrophile in the catalytic mechanism. Glu-145 acts as the Proton acceptor in catalysis. Substrate contacts are provided by residues Ile-150, Gly-185, and 206-207 (AS).

The protein belongs to the triosephosphate isomerase family. In terms of assembly, homotetramer; dimer of dimers.

The protein resides in the cytoplasm. It carries out the reaction D-glyceraldehyde 3-phosphate = dihydroxyacetone phosphate. It functions in the pathway carbohydrate biosynthesis; gluconeogenesis. Its pathway is carbohydrate degradation; glycolysis; D-glyceraldehyde 3-phosphate from glycerone phosphate: step 1/1. Its function is as follows. Involved in the gluconeogenesis. Catalyzes stereospecifically the conversion of dihydroxyacetone phosphate (DHAP) to D-glyceraldehyde-3-phosphate (G3P). The polypeptide is Triosephosphate isomerase (Methanobacterium bryantii).